Consider the following 280-residue polypeptide: Shikimate dehydrogenase (NADP(+)) (280 aa).

Residues T20 to S22 and T67 each bind shikimate. The active-site Proton acceptor is K71. N92 and D107 together coordinate shikimate. NADP(+)-binding positions include G131–A135, N154–K159, and L224. Position 226 (Y226) interacts with shikimate. Position 247 (G247) interacts with NADP(+).

Belongs to the shikimate dehydrogenase family. In terms of assembly, homodimer.

The enzyme catalyses shikimate + NADP(+) = 3-dehydroshikimate + NADPH + H(+). Its pathway is metabolic intermediate biosynthesis; chorismate biosynthesis; chorismate from D-erythrose 4-phosphate and phosphoenolpyruvate: step 4/7. Its function is as follows. Involved in the biosynthesis of the chorismate, which leads to the biosynthesis of aromatic amino acids. Catalyzes the reversible NADPH linked reduction of 3-dehydroshikimate (DHSA) to yield shikimate (SA). The sequence is that of Shikimate dehydrogenase (NADP(+)) from Carboxydothermus hydrogenoformans (strain ATCC BAA-161 / DSM 6008 / Z-2901).